A 571-amino-acid polypeptide reads, in one-letter code: Apolipoprotein N-acyltransferase (571 aa).

The next 6 helical transmembrane spans lie at 13–33, 51–68, 72–92, 118–138, 152–172, and 199–219; these read VVLW…IALV, LYAA…GLRY, LMFL…VLFI, LVAA…FTGI, MLIQ…IVCV, and LVTA…SMNA. One can recognise a CN hydrolase domain in the interval 234–527; it reads NELTVYEQDI…SDVIYAQPRR (294 aa). Glu-275 functions as the Proton acceptor in the catalytic mechanism. The active site involves Lys-380. Cys-430 (nucleophile) is an active-site residue. Residues 542 to 562 form a helical membrane-spanning segment; the sequence is AGLMGAATLCGLAWMTFEWLM.

The protein belongs to the CN hydrolase family. Apolipoprotein N-acyltransferase subfamily.

It localises to the cell inner membrane. It carries out the reaction N-terminal S-1,2-diacyl-sn-glyceryl-L-cysteinyl-[lipoprotein] + a glycerophospholipid = N-acyl-S-1,2-diacyl-sn-glyceryl-L-cysteinyl-[lipoprotein] + a 2-acyl-sn-glycero-3-phospholipid + H(+). The protein operates within protein modification; lipoprotein biosynthesis (N-acyl transfer). Functionally, catalyzes the phospholipid dependent N-acylation of the N-terminal cysteine of apolipoprotein, the last step in lipoprotein maturation. The protein is Apolipoprotein N-acyltransferase of Rhodopirellula baltica (strain DSM 10527 / NCIMB 13988 / SH1).